Consider the following 379-residue polypeptide: Mannitol-1-phosphate 5-dehydrogenase (379 aa).

NAD(+) is bound at residue 3-14; the sequence is AVHFGAGNIGRG.

It belongs to the mannitol dehydrogenase family.

It carries out the reaction D-mannitol 1-phosphate + NAD(+) = beta-D-fructose 6-phosphate + NADH + H(+). This chain is Mannitol-1-phosphate 5-dehydrogenase, found in Anoxybacillus flavithermus (strain DSM 21510 / WK1).